Here is a 727-residue protein sequence, read N- to C-terminus: Glucans biosynthesis glucosyltransferase H (727 aa).

The disordered stretch occupies residues 18 to 38; it reads SAMPNERPGAMEPQNLSKMPE. Transmembrane regions (helical) follow at residues 58–78, 97–117, 278–298, 408–428, 460–480, 496–516, and 572–592; these read FLVV…MGAV, VNFC…LILL, LQQF…GWWV, IMAY…LMLA, LFYI…LLLL, IFSV…MMFI, and LLAW…ISAW.

The protein belongs to the glycosyltransferase 2 family. OpgH subfamily.

The protein resides in the cell inner membrane. It participates in glycan metabolism; osmoregulated periplasmic glucan (OPG) biosynthesis. Its function is as follows. Involved in the biosynthesis of osmoregulated periplasmic glucans (OPGs). The polypeptide is Glucans biosynthesis glucosyltransferase H (Shewanella baltica (strain OS185)).